A 525-amino-acid chain; its full sequence is ATP synthase subunit alpha (525 aa).

ATP is bound at residue 169–176; the sequence is GDRQTGKT.

The protein belongs to the ATPase alpha/beta chains family. As to quaternary structure, F-type ATPases have 2 components, CF(1) - the catalytic core - and CF(0) - the membrane proton channel. CF(1) has five subunits: alpha(3), beta(3), gamma(1), delta(1), epsilon(1). CF(0) has three main subunits: a(1), b(2) and c(9-12). The alpha and beta chains form an alternating ring which encloses part of the gamma chain. CF(1) is attached to CF(0) by a central stalk formed by the gamma and epsilon chains, while a peripheral stalk is formed by the delta and b chains.

It localises to the cell membrane. It carries out the reaction ATP + H2O + 4 H(+)(in) = ADP + phosphate + 5 H(+)(out). Functionally, produces ATP from ADP in the presence of a proton gradient across the membrane. The alpha chain is a regulatory subunit. This chain is ATP synthase subunit alpha, found in Mesoplasma florum (strain ATCC 33453 / NBRC 100688 / NCTC 11704 / L1) (Acholeplasma florum).